A 119-amino-acid chain; its full sequence is Small ribosomal subunit protein eS25 (119 aa).

The interval 1–42 (MPPKKDTKASAKQPQKTQKKKEGSGGGKAKKKKWSKGKVRDK) is disordered. Basic residues predominate over residues 28-37 (KAKKKKWSKG).

Belongs to the eukaryotic ribosomal protein eS25 family.

This Spodoptera frugiperda (Fall armyworm) protein is Small ribosomal subunit protein eS25 (RpS25).